We begin with the raw amino-acid sequence, 283 residues long: ATP phosphoribosyltransferase (283 aa).

The protein belongs to the ATP phosphoribosyltransferase family. Long subfamily. It depends on Mg(2+) as a cofactor.

The protein resides in the cytoplasm. The catalysed reaction is 1-(5-phospho-beta-D-ribosyl)-ATP + diphosphate = 5-phospho-alpha-D-ribose 1-diphosphate + ATP. The protein operates within amino-acid biosynthesis; L-histidine biosynthesis; L-histidine from 5-phospho-alpha-D-ribose 1-diphosphate: step 1/9. Its activity is regulated as follows. Feedback inhibited by histidine. Catalyzes the condensation of ATP and 5-phosphoribose 1-diphosphate to form N'-(5'-phosphoribosyl)-ATP (PR-ATP). Has a crucial role in the pathway because the rate of histidine biosynthesis seems to be controlled primarily by regulation of HisG enzymatic activity. The protein is ATP phosphoribosyltransferase of Bacteroides thetaiotaomicron (strain ATCC 29148 / DSM 2079 / JCM 5827 / CCUG 10774 / NCTC 10582 / VPI-5482 / E50).